The chain runs to 495 residues: Ankyrin repeat domain-containing protein 34A (495 aa).

ANK repeat units follow at residues 4–33 (TEGH…YVNE), 37–72 (QGET…DPNI), 76–106 (LGRT…DPSV), and 110–139 (AGAS…AKGT). The residue at position 15 (Gln15) is an N5-methylglutamine. Composition is skewed to polar residues over residues 147-162 (DTSP…YLNS) and 180-191 (VCTSPSEVQLQT). The tract at residues 147–495 (DTSPSGTKKT…SLGGPGEPGR (349 aa)) is disordered. The segment covering 203 to 213 (AQEEEEKRDVF) has biased composition (basic and acidic residues). Over residues 223–232 (DPSPSEPLPK) the composition is skewed to pro residues. Positions 233 to 242 (PPRHPPKPLK) are enriched in basic residues. Position 315 is a phosphothreonine (Thr315). A compositionally biased stretch (polar residues) spans 375–385 (SVSSPRQSQES). Residues 462–472 (RTKRKLVRRHS) show a composition bias toward basic residues. A compositionally biased stretch (gly residues) spans 485–495 (QSLGGPGEPGR).

It belongs to the ANKRD34 family. In terms of processing, methylated at Gln-15 by N6AMT1.

This is Ankyrin repeat domain-containing protein 34A (Ankrd34a) from Rattus norvegicus (Rat).